The following is a 369-amino-acid chain: S-(hydroxymethyl)glutathione dehydrogenase (369 aa).

Residues Cys40, His62, Cys92, Cys95, Cys98, Cys106, and Cys169 each coordinate Zn(2+).

Belongs to the zinc-containing alcohol dehydrogenase family. Class-III subfamily. In terms of assembly, homodimer. Zn(2+) is required as a cofactor.

It localises to the cytoplasm. The catalysed reaction is S-(hydroxymethyl)glutathione + NADP(+) = S-formylglutathione + NADPH + H(+). The enzyme catalyses S-(hydroxymethyl)glutathione + NAD(+) = S-formylglutathione + NADH + H(+). It catalyses the reaction a primary alcohol + NAD(+) = an aldehyde + NADH + H(+). It carries out the reaction a secondary alcohol + NAD(+) = a ketone + NADH + H(+). The catalysed reaction is S-nitrosoglutathione + NADH + H(+) = S-(hydroxysulfenamide)glutathione + NAD(+). Functionally, has high formaldehyde dehydrogenase activity in the presence of glutathione and catalyzes the oxidation of normal alcohols in a reaction that is not GSH-dependent. In addition, hemithiolacetals other than those formed from GSH, including omega-thiol fatty acids, also are substrates. Also acts as a S-nitroso-glutathione reductase by catalyzing the NADH-dependent reduction of S-nitrosoglutathione. In Photobacterium damsela subsp. piscicida (Pasteurella piscicida), this protein is S-(hydroxymethyl)glutathione dehydrogenase (frmA).